A 130-amino-acid chain; its full sequence is MAETQAPTGYLFSEKHEWVKVEGDMALIGISDFAQSALGDIVFVDLPKTGKNIKQFETFGTIESVKAAEDLYAPIGGEVIESNSALSKNPGDVNSKPFDSWMIKVKGFSTSELDKLLTPEKYKALVAGLE.

Positions 25 to 106 (MALIGISDFA…PFDSWMIKVK (82 aa)) constitute a Lipoyl-binding domain. N6-lipoyllysine is present on K66.

This sequence belongs to the GcvH family. As to quaternary structure, the glycine cleavage system is composed of four proteins: P, T, L and H. (R)-lipoate is required as a cofactor.

Functionally, the glycine cleavage system catalyzes the degradation of glycine. The H protein shuttles the methylamine group of glycine from the P protein to the T protein. This chain is Glycine cleavage system H protein, found in Leptospira interrogans serogroup Icterohaemorrhagiae serovar copenhageni (strain Fiocruz L1-130).